Consider the following 137-residue polypeptide: Peptide methionine sulfoxide reductase MsrB (137 aa).

The MsrB domain maps to 9-131 (DAEWRAMLDD…NSASLRFDAT (123 aa)). Residues Cys-48, Cys-51, Cys-97, and Cys-100 each coordinate Zn(2+). Catalysis depends on Cys-120, which acts as the Nucleophile.

The protein belongs to the MsrB Met sulfoxide reductase family. The cofactor is Zn(2+).

It carries out the reaction L-methionyl-[protein] + [thioredoxin]-disulfide + H2O = L-methionyl-(R)-S-oxide-[protein] + [thioredoxin]-dithiol. The chain is Peptide methionine sulfoxide reductase MsrB from Herminiimonas arsenicoxydans.